The primary structure comprises 236 residues: Orotidine 5'-phosphate decarboxylase (236 aa).

Substrate contacts are provided by residues Asp16, Lys38, 65 to 74 (DLKLHDIGNT), Thr123, Arg184, Gln193, Gly213, and Arg214. The active-site Proton donor is the Lys67.

It belongs to the OMP decarboxylase family. Type 1 subfamily. As to quaternary structure, homodimer.

The enzyme catalyses orotidine 5'-phosphate + H(+) = UMP + CO2. It participates in pyrimidine metabolism; UMP biosynthesis via de novo pathway; UMP from orotate: step 2/2. Catalyzes the decarboxylation of orotidine 5'-monophosphate (OMP) to uridine 5'-monophosphate (UMP). The chain is Orotidine 5'-phosphate decarboxylase from Methylobacterium nodulans (strain LMG 21967 / CNCM I-2342 / ORS 2060).